The primary structure comprises 161 residues: Large ribosomal subunit protein uL15 (161 aa).

The tract at residues 1-41 (MTKLNELAPAPGSTKGRMRVGRGPGSGKGKTAGRGVKGQKA) is disordered. Residues 22–36 (RGPGSGKGKTAGRGV) are compositionally biased toward gly residues.

The protein belongs to the universal ribosomal protein uL15 family. As to quaternary structure, part of the 50S ribosomal subunit.

Its function is as follows. Binds to the 23S rRNA. In Caulobacter sp. (strain K31), this protein is Large ribosomal subunit protein uL15.